Here is a 228-residue protein sequence, read N- to C-terminus: Small ribosomal subunit protein uS3 (228 aa).

Residues 39 to 107 (VREYLQDKLK…PVHINIEEIR (69 aa)) enclose the KH type-2 domain.

This sequence belongs to the universal ribosomal protein uS3 family. Part of the 30S ribosomal subunit. Forms a tight complex with proteins S10 and S14.

Binds the lower part of the 30S subunit head. Binds mRNA in the 70S ribosome, positioning it for translation. This Pseudomonas aeruginosa (strain UCBPP-PA14) protein is Small ribosomal subunit protein uS3.